The sequence spans 634 residues: Probable potassium transport system protein Kup (634 aa).

The next 12 helical transmembrane spans lie at 19–39 (AIGL…TSPL), 62–82 (VLSL…VIFV), 113–133 (FVVV…MITP), 150–170 (GLEH…FLIQ), 177–197 (IGIL…ALGV), 225–245 (IGVA…ALYA), 259–279 (WFLL…ATIL), 291–311 (LLAP…ATVI), 349–369 (IYIG…VLGF), 379–399 (YGVA…VVIW), 406–426 (LWLG…FFAA), and 431–451 (VIQG…LMST).

It belongs to the HAK/KUP transporter (TC 2.A.72) family.

The protein resides in the cell inner membrane. It carries out the reaction K(+)(in) + H(+)(in) = K(+)(out) + H(+)(out). Functionally, transport of potassium into the cell. Likely operates as a K(+):H(+) symporter. This chain is Probable potassium transport system protein Kup, found in Pseudomonas aeruginosa (strain LESB58).